The chain runs to 178 residues: Disulfide bond formation protein B (178 aa).

Topologically, residues 1-14 are cytoplasmic; the sequence is MLSFFKTLSTKRSA. The chain crosses the membrane as a helical span at residues 15-31; sequence WFLLFSSALLLEAIALY. At 32 to 49 the chain is on the periplasmic side; it reads FQHGMGLAPCVMCIYERV. The cysteines at positions 41 and 44 are disulfide-linked. The chain crosses the membrane as a helical span at residues 50 to 65; it reads AILGIAFSGLLGLLYP. Over 66-72 the chain is Cytoplasmic; that stretch reads SSMLLRL. The helical transmembrane segment at 73–90 threads the bilayer; sequence VALLIGLSSAIKGLMISI. Topologically, residues 91-145 are periplasmic; the sequence is THLDLQLYPAPWKQCSAVAEFPETLPLDQWFPALFLPSGSCSEVTWQFLGFSMVQ. Cys105 and Cys131 are joined by a disulfide. Residues 146–164 form a helical membrane-spanning segment; it reads WIVVIFALYTLLLALIFIS. The Cytoplasmic segment spans residues 165-177; sequence QVKRLKPKQRRLF.

The protein belongs to the DsbB family.

It is found in the cell inner membrane. Functionally, required for disulfide bond formation in some periplasmic proteins. Acts by oxidizing the DsbA protein. This is Disulfide bond formation protein B from Pasteurella multocida (strain Pm70).